Reading from the N-terminus, the 269-residue chain is MTNRYTTLFANLEKRNEGAFIPFVTIGDPNKALSFEIIDTLVSSGADALELGIPFSDPLADGPTIQEANIRALESGITPKDCFDILTKIRAKYPHIPIGLLLYANLVYANGIENFYQKCLDAGVDSILIADVPAHESKEFRDIAKKVSIAQIFIAPPDASESTLKQISELGSGYTYLLSRVGVTGTETAANMPVEDVLTKLREYNAPKPVLGFGISKPEQVQQAIKAGAAGAISGSATVKIIQNNISNKQKMLNELTYFVKEMKAATLN.

Residues E50 and D61 each act as proton acceptor in the active site.

It belongs to the TrpA family. Tetramer of two alpha and two beta chains.

It catalyses the reaction (1S,2R)-1-C-(indol-3-yl)glycerol 3-phosphate + L-serine = D-glyceraldehyde 3-phosphate + L-tryptophan + H2O. It participates in amino-acid biosynthesis; L-tryptophan biosynthesis; L-tryptophan from chorismate: step 5/5. Its function is as follows. The alpha subunit is responsible for the aldol cleavage of indoleglycerol phosphate to indole and glyceraldehyde 3-phosphate. The chain is Tryptophan synthase alpha chain from Francisella tularensis subsp. tularensis (strain WY96-3418).